A 123-amino-acid chain; its full sequence is Homeobox protein CDX-1 (123 aa).

Residues 5 to 64 (KDKYRVVYTDHQRLELEKEFHYSRYITIRRKSELAANLGLTERQVKIWFQNRRAKERKVN) constitute a DNA-binding region (homeobox). The interval 8 to 29 (YRVVYTDHQRLELEKEFHYSRY) is interaction with DNA. The interval 47 to 58 (RQVKIWFQNRRA) is interaction with 5-mCpG DNA. Basic residues predominate over residues 57–68 (RAKERKVNKKKQ). The tract at residues 57-123 (RAKERKVNKK…PVPVKEEFLP (67 aa)) is disordered.

Belongs to the Caudal homeobox family. Intestinal epithelium.

It is found in the nucleus. Its function is as follows. Plays a role in transcriptional regulation. Involved in activated KRAS-mediated transcriptional activation of PRKD1 in colorectal cancer (CRC) cells. Binds to the PRKD1 promoter in colorectal cancer (CRC) cells. Could play a role in the terminal differentiation of the intestine. Binds preferentially to methylated DNA. The sequence is that of Homeobox protein CDX-1 (Cdx1) from Rattus norvegicus (Rat).